We begin with the raw amino-acid sequence, 456 residues long: tRNA modification GTPase MnmE (456 aa).

The (6S)-5-formyl-5,6,7,8-tetrahydrofolate site is built by arginine 23, glutamate 80, and lysine 122. The TrmE-type G domain maps to 218–380 (AKRIVIVGPP…LKKHLSNRQK (163 aa)). Asparagine 228 is a K(+) binding site. GTP contacts are provided by residues 228–233 (NAGKSS), 247–253 (TDLPGTT), and 272–275 (DTAG). Serine 232 contributes to the Mg(2+) binding site. Positions 247, 249, and 252 each coordinate K(+). Position 253 (threonine 253) interacts with Mg(2+). Lysine 456 serves as a coordination point for (6S)-5-formyl-5,6,7,8-tetrahydrofolate.

This sequence belongs to the TRAFAC class TrmE-Era-EngA-EngB-Septin-like GTPase superfamily. TrmE GTPase family. In terms of assembly, homodimer. Heterotetramer of two MnmE and two MnmG subunits. The cofactor is K(+).

The protein resides in the cytoplasm. Exhibits a very high intrinsic GTPase hydrolysis rate. Involved in the addition of a carboxymethylaminomethyl (cmnm) group at the wobble position (U34) of certain tRNAs, forming tRNA-cmnm(5)s(2)U34. The polypeptide is tRNA modification GTPase MnmE (Buchnera aphidicola subsp. Schizaphis graminum (strain Sg)).